The chain runs to 196 residues: NADH-quinone oxidoreductase subunit I (196 aa).

2 consecutive 4Fe-4S ferredoxin-type domains span residues L54 to A84 and R104 to E133. Residues C64, C67, C70, C74, C113, C116, C119, and C123 each coordinate [4Fe-4S] cluster.

The protein belongs to the complex I 23 kDa subunit family. As to quaternary structure, NDH-1 is composed of 14 different subunits. Subunits NuoA, H, J, K, L, M, N constitute the membrane sector of the complex. [4Fe-4S] cluster is required as a cofactor.

It localises to the cell membrane. The catalysed reaction is a quinone + NADH + 5 H(+)(in) = a quinol + NAD(+) + 4 H(+)(out). Functionally, NDH-1 shuttles electrons from NADH, via FMN and iron-sulfur (Fe-S) centers, to quinones in the respiratory chain. The immediate electron acceptor for the enzyme in this species is believed to be ubiquinone. Couples the redox reaction to proton translocation (for every two electrons transferred, four hydrogen ions are translocated across the cytoplasmic membrane), and thus conserves the redox energy in a proton gradient. The polypeptide is NADH-quinone oxidoreductase subunit I (Nocardioides sp. (strain ATCC BAA-499 / JS614)).